We begin with the raw amino-acid sequence, 217 residues long: Large ribosomal subunit protein uL1 (217 aa).

Ser2 bears the N-acetylserine mark. Tyr11 carries the post-translational modification Phosphotyrosine. N6-acetyllysine occurs at positions 91 and 106. Lys118 is modified (N6-acetyllysine; alternate). Residue Lys118 forms a Glycyl lysine isopeptide (Lys-Gly) (interchain with G-Cter in SUMO1); alternate linkage. Lys118 is covalently cross-linked (Glycyl lysine isopeptide (Lys-Gly) (interchain with G-Cter in SUMO2); alternate).

It belongs to the universal ribosomal protein uL1 family. In terms of assembly, component of the large ribosomal subunit.

Its subcellular location is the cytoplasm. Its function is as follows. Component of the large ribosomal subunit. The ribosome is a large ribonucleoprotein complex responsible for the synthesis of proteins in the cell. The sequence is that of Large ribosomal subunit protein uL1 (RPL10A) from Macaca fascicularis (Crab-eating macaque).